Consider the following 467-residue polypeptide: Protein indeterminate-domain 6, chloroplastic (467 aa).

The transit peptide at 1–20 (MSSSYNTIALSSTPTFLLSS) directs the protein to the chloroplast. The segment at 38–65 (TMVQQQPTSSVAPPPKKRRNQPGNPNPD) is disordered. Positions 39-48 (MVQQQPTSSV) are enriched in polar residues. Ser72 carries the phosphoserine modification. C2H2-type zinc fingers lie at residues 82 to 104 (FLCE…RRGH) and 123 to 153 (YLCP…YRKH). The C2H2-type 2; degenerate zinc finger occupies 158 to 181 (WKCDKCSKRYAVQSDWKAHSKTCG). Positions 160, 163, 176, 180, 187, 189, 202, and 206 each coordinate Zn(2+). The CCHC-type 2; atypical zinc finger occupies 185-208 (YRCDCGTIFSRRDSYITHRAFCDA). The SHR-binding stretch occupies residues 195–207 (RRDSYITHRAFCD). The segment at 440 to 467 (NGRGGRSGGPPLDAEMKFSHPNHPYGKA) is disordered.

It localises to the plastid. It is found in the chloroplast. In terms of biological role, probable transcription factor. The chain is Protein indeterminate-domain 6, chloroplastic from Arabidopsis thaliana (Mouse-ear cress).